The following is a 373-amino-acid chain: D-alanine--D-alanine ligase (373 aa).

One can recognise an ATP-grasp domain in the interval Lys-156–Glu-363. Leu-184–Glu-239 contributes to the ATP binding site. The Mg(2+) site is built by Asp-318, Glu-330, and Asn-332.

It belongs to the D-alanine--D-alanine ligase family. Mg(2+) is required as a cofactor. The cofactor is Mn(2+).

The protein resides in the cytoplasm. It carries out the reaction 2 D-alanine + ATP = D-alanyl-D-alanine + ADP + phosphate + H(+). It functions in the pathway cell wall biogenesis; peptidoglycan biosynthesis. Functionally, cell wall formation. In Mycobacterium ulcerans (strain Agy99), this protein is D-alanine--D-alanine ligase.